The primary structure comprises 420 residues: ATP phosphoribosyltransferase regulatory subunit (420 aa).

It belongs to the class-II aminoacyl-tRNA synthetase family. HisZ subfamily. Heteromultimer composed of HisG and HisZ subunits.

Its subcellular location is the cytoplasm. It functions in the pathway amino-acid biosynthesis; L-histidine biosynthesis; L-histidine from 5-phospho-alpha-D-ribose 1-diphosphate: step 1/9. In terms of biological role, required for the first step of histidine biosynthesis. May allow the feedback regulation of ATP phosphoribosyltransferase activity by histidine. The protein is ATP phosphoribosyltransferase regulatory subunit of Bacillus anthracis (strain A0248).